A 946-amino-acid chain; its full sequence is Histone-lysine N-methyltransferase, H3 lysine-79 specific (946 aa).

The segment covering 1-18 has biased composition (basic and acidic residues); the sequence is MSEADAGARDESPSRTAE. The disordered stretch occupies residues 1-28; it reads MSEADAGARDESPSRTAEEPAAAMRIKE. The DOT1 domain occupies 54-369; the sequence is QGKTLRLPGN…KLIKYYEDQR (316 aa). S-adenosyl-L-methionine is bound by residues 173 to 176, 196 to 205, E223, and 259 to 260; these read YGET, FVDLGSGIGQ, and DF. A compositionally biased stretch (basic and acidic residues) spans 368–409; sequence QRRRQEVKSSREGSEISDGRDMGLKKRKSQRESSVHPDKLQK. Disordered regions lie at residues 368-577 and 849-905; these read QRRR…HGGG and PTAS…GATE. A compositionally biased stretch (polar residues) spans 410–422; it reads TEQAAASSHQSPK. Basic and acidic residues predominate over residues 464–484; sequence GKDREKEKEKKKNKIYEEKKV. Low complexity-rich tracts occupy residues 491-502, 512-528, and 855-864; these read KSSSSRYSSETP, NSIS…QPKA, and SKVSPSSSSS. Positions 880 to 903 are enriched in gly residues; it reads GAGGGGKRGTSGGRKSDGGGGGGA.

This sequence belongs to the class I-like SAM-binding methyltransferase superfamily. DOT1 family. As to quaternary structure, interacts with zfp-1 (via C-terminus) to form a heterodimer known as the zfp-1-dot-1.1 complex or DotCom complex.

It is found in the nucleus. The protein localises to the chromosome. The catalysed reaction is L-lysyl(79)-[histone H3] + 3 S-adenosyl-L-methionine = N(6),N(6),N(6)-trimethyl-L-lysyl(79)-[histone H3] + 3 S-adenosyl-L-homocysteine + 3 H(+). Its function is as follows. Histone methyltransferase, which in complex with zfp-1, methylates 'Lys-79' of histone H3 to activate transcription. During stress, the zfp-1-dot-1.1 complex also plays a role in the deubiquitination of histone H2B sites, which negatively modulates the RNA polymerase II-induced transcription of highly expressed genes. Involved in controlling tissue-specific gene expression, particularly in the epidermis. This is Histone-lysine N-methyltransferase, H3 lysine-79 specific from Caenorhabditis elegans.